A 190-amino-acid polypeptide reads, in one-letter code: Elongation factor P (190 aa).

The protein belongs to the elongation factor P family.

Its subcellular location is the cytoplasm. The protein operates within protein biosynthesis; polypeptide chain elongation. Its function is as follows. Involved in peptide bond synthesis. Stimulates efficient translation and peptide-bond synthesis on native or reconstituted 70S ribosomes in vitro. Probably functions indirectly by altering the affinity of the ribosome for aminoacyl-tRNA, thus increasing their reactivity as acceptors for peptidyl transferase. This Mycoplasma pneumoniae (strain ATCC 29342 / M129 / Subtype 1) (Mycoplasmoides pneumoniae) protein is Elongation factor P (efp).